Consider the following 282-residue polypeptide: MLIAHSIADLRSALASRGRPAFVPTMGNLHEGHLSLVRQARTLGDVTVASIFVNRLQFLPHEDFDSYPRTWEADRAQLEVAGCDILFAPREADLYPQAQTFKVQPDPLLADLLEGHFRPGFFTGVCTVVMKLFSAVFGTTGGGTALFGKKDYQQLMVIRRMVEQFALPVDIVAGDTCRAPDGLALSSRNGYLGPAERTKAVELARALRTLSDAALSRPVADWPGLEAAASDALRGQGWQPDYLVVRRRADLQRPDTAPRPGTLVALGAARLGSTRLIDNFEF.

26 to 33 (MGNLHEGH) provides a ligand contact to ATP. H33 (proton donor) is an active-site residue. A (R)-pantoate-binding site is contributed by Q57. A beta-alanine-binding site is contributed by Q57. 148–151 (GKKD) serves as a coordination point for ATP. Q154 provides a ligand contact to (R)-pantoate. 185–188 (LSSR) contributes to the ATP binding site.

It belongs to the pantothenate synthetase family. Homodimer.

It localises to the cytoplasm. It carries out the reaction (R)-pantoate + beta-alanine + ATP = (R)-pantothenate + AMP + diphosphate + H(+). The protein operates within cofactor biosynthesis; (R)-pantothenate biosynthesis; (R)-pantothenate from (R)-pantoate and beta-alanine: step 1/1. Catalyzes the condensation of pantoate with beta-alanine in an ATP-dependent reaction via a pantoyl-adenylate intermediate. This Paracidovorax citrulli (strain AAC00-1) (Acidovorax citrulli) protein is Pantothenate synthetase.